A 388-amino-acid chain; its full sequence is Succinate--CoA ligase [ADP-forming] subunit beta (388 aa).

Positions 9-244 (KQIFAQYGLP…PSQEDAREAA (236 aa)) constitute an ATP-grasp domain. Residues K46, 53–55 (GRG), E99, A102, and E107 contribute to the ATP site. Residues N199 and D213 each contribute to the Mg(2+) site. Residues N264 and 321–323 (GIV) each bind substrate.

Belongs to the succinate/malate CoA ligase beta subunit family. Heterotetramer of two alpha and two beta subunits. Mg(2+) serves as cofactor.

It catalyses the reaction succinate + ATP + CoA = succinyl-CoA + ADP + phosphate. The catalysed reaction is GTP + succinate + CoA = succinyl-CoA + GDP + phosphate. It participates in carbohydrate metabolism; tricarboxylic acid cycle; succinate from succinyl-CoA (ligase route): step 1/1. Succinyl-CoA synthetase functions in the citric acid cycle (TCA), coupling the hydrolysis of succinyl-CoA to the synthesis of either ATP or GTP and thus represents the only step of substrate-level phosphorylation in the TCA. The beta subunit provides nucleotide specificity of the enzyme and binds the substrate succinate, while the binding sites for coenzyme A and phosphate are found in the alpha subunit. The sequence is that of Succinate--CoA ligase [ADP-forming] subunit beta from Mannheimia succiniciproducens (strain KCTC 0769BP / MBEL55E).